The chain runs to 218 residues: Hypoxanthine-guanine phosphoribosyltransferase (218 aa).

Position 2 is an N-acetylalanine (Ala2). Lys69 contacts GMP. Lys103 carries the post-translational modification N6-acetyllysine. Lys115 is covalently cross-linked (Glycyl lysine isopeptide (Lys-Gly) (interchain with G-Cter in SUMO1); alternate). Lys115 participates in a covalent cross-link: Glycyl lysine isopeptide (Lys-Gly) (interchain with G-Cter in SUMO2); alternate. Residues 134-142 (EDIIDTGKT), Lys166, 186-188 (KFV), and Asp194 contribute to the GMP site. The active-site Proton acceptor is the Asp138. Thr142 carries the phosphothreonine modification. Position 194 (Asp194) interacts with Mg(2+).

Belongs to the purine/pyrimidine phosphoribosyltransferase family. As to quaternary structure, homotetramer. It depends on Mg(2+) as a cofactor.

The protein resides in the cytoplasm. The catalysed reaction is IMP + diphosphate = hypoxanthine + 5-phospho-alpha-D-ribose 1-diphosphate. It carries out the reaction GMP + diphosphate = guanine + 5-phospho-alpha-D-ribose 1-diphosphate. It functions in the pathway purine metabolism; IMP biosynthesis via salvage pathway; IMP from hypoxanthine: step 1/1. Converts guanine to guanosine monophosphate, and hypoxanthine to inosine monophosphate. Transfers the 5-phosphoribosyl group from 5-phosphoribosylpyrophosphate onto the purine. Plays a central role in the generation of purine nucleotides through the purine salvage pathway. The polypeptide is Hypoxanthine-guanine phosphoribosyltransferase (HPRT1) (Pan troglodytes (Chimpanzee)).